Reading from the N-terminus, the 206-residue chain is Large ribosomal subunit protein eL8 (206 aa).

This sequence belongs to the eukaryotic ribosomal protein eL8 family. Component of the large ribosomal subunit.

Its subcellular location is the cytoplasm. The chain is Large ribosomal subunit protein eL8 (RPL7A) from Encephalitozoon cuniculi (strain GB-M1) (Microsporidian parasite).